A 433-amino-acid polypeptide reads, in one-letter code: Chaperone SurA (433 aa).

Positions 1–20 are cleaved as a signal peptide; that stretch reads MKNWRTLIFGLMFSVSTAFA. PpiC domains follow at residues 171 to 272 and 282 to 382; these read DTEL…KVND and VTEV…QLLD.

The protein localises to the periplasm. The catalysed reaction is [protein]-peptidylproline (omega=180) = [protein]-peptidylproline (omega=0). Its function is as follows. Chaperone involved in the correct folding and assembly of outer membrane proteins. Recognizes specific patterns of aromatic residues and the orientation of their side chains, which are found more frequently in integral outer membrane proteins. May act in both early periplasmic and late outer membrane-associated steps of protein maturation. This chain is Chaperone SurA, found in Photorhabdus laumondii subsp. laumondii (strain DSM 15139 / CIP 105565 / TT01) (Photorhabdus luminescens subsp. laumondii).